Consider the following 906-residue polypeptide: Protein translocase subunit SecA (906 aa).

Residues Gln86, 104–108 (GEGKT), and Asp499 contribute to the ATP site. Residues Cys890, Cys892, Cys901, and His902 each coordinate Zn(2+).

This sequence belongs to the SecA family. In terms of assembly, monomer and homodimer. Part of the essential Sec protein translocation apparatus which comprises SecA, SecYEG and auxiliary proteins SecDF-YajC and YidC. Zn(2+) serves as cofactor.

Its subcellular location is the cell inner membrane. It localises to the cytoplasm. The catalysed reaction is ATP + H2O + cellular proteinSide 1 = ADP + phosphate + cellular proteinSide 2.. Its function is as follows. Part of the Sec protein translocase complex. Interacts with the SecYEG preprotein conducting channel. Has a central role in coupling the hydrolysis of ATP to the transfer of proteins into and across the cell membrane, serving both as a receptor for the preprotein-SecB complex and as an ATP-driven molecular motor driving the stepwise translocation of polypeptide chains across the membrane. The protein is Protein translocase subunit SecA of Rickettsia prowazekii (strain Madrid E).